Consider the following 668-residue polypeptide: E3 ubiquitin-protein ligase RNF139 (668 aa).

Residue A2 is modified to N-acetylalanine. Transmembrane regions (helical) follow at residues 51–71 (IGLQ…VLIL), 85–105 (AFLL…HIDF), 125–145 (SLWM…VTLL), 154–174 (LMIL…PLHI), 178–198 (VVLM…AVKL), 293–313 (GMSA…LAFI), 323–343 (LGFV…LSGL), 356–376 (MCLL…PVLM), 390–410 (FPVL…SYVL), 420–440 (LFAV…SLTV), and 470–490 (IIEF…MMFE). The RING-type; atypical zinc finger occupies 547-586 (CAICYHEFTTSARITPCNHYFHALCLRKWLYIQDTCPMCH). The disordered stretch occupies residues 602-668 (SNNNGFIAPN…AAAEFNDDTD (67 aa)). Residues 618-630 (EALREDAAGSDRE) show a composition bias toward basic and acidic residues. The segment covering 631–641 (LNEDDSTDCDD) has biased composition (acidic residues). S636 bears the Phosphoserine mark. A phosphothreonine mark is found at T637 and T667.

Interacts with VHL. Interacts with MHC class I and HM13. Component of SCAP-SREBP complex composed of SREBF2, SCAP and RNF139; the complex hampers the interaction between SCAP and SEC24B, thereby reducing SREBF2 proteolytic processing. Interacts with SREBF2 (via C-terminal domain). Interacts with SCAP; the interaction inhibits the interaction of SCAP with SEC24B and hampering the ER to Golgi transport of the SCAP-SREBP complex. Interacts with SEC24B. Interacts with INSIG1 and INSIG2. Interacts with EIF3F and EIF3H; the interaction leads to protein translation inhibitions in a ubiquitination-dependent manner. Interacts with XBP1 isoform 1; the interaction induces ubiquitination and degradation of XBP1 isoform 1. Interacts with AUP1, AMFR and UBE2G2; interaction with AUP1 facilitates interaction of RNF139 with ubiquitin-conjugating enzyme UBE2G2 and ubiquitin ligase AMFR/gp78, leading to sterol-induced ubiquitination of HMGCR and its subsequent proteasomal degradation. In terms of processing, autoubiquitinated. Ubiquitination is induced by sterol and leads to ist degradation via the ubiquitin-proteasome pathway.

Its subcellular location is the endoplasmic reticulum membrane. It catalyses the reaction S-ubiquitinyl-[E2 ubiquitin-conjugating enzyme]-L-cysteine + [acceptor protein]-L-lysine = [E2 ubiquitin-conjugating enzyme]-L-cysteine + N(6)-ubiquitinyl-[acceptor protein]-L-lysine.. Its pathway is protein modification; protein ubiquitination. In terms of biological role, E3-ubiquitin ligase; acts as a negative regulator of cell proliferation through mechanisms involving G2/M arrest and cell death. Required for MHC class I ubiquitination in cells expressing the cytomegalovirus protein US2 before dislocation from the endoplasmic reticulum (ER). Affects SREBP processing by hindering the SREBP-SCAP complex translocation from the ER to the Golgi, thereby reducing SREBF2 target gene expression. Involved in the sterol-accelerated degradation of HMGCR. This is achieved through binding to INSIG1 and/or INSIG2 at the ER membrane. In addition, interaction of RNF139 with AUP1 facilitates interaction of RNF139 with ubiquitin-conjugating enzyme UBE2G2 and ubiquitin ligase AMFR, leading to ubiquitination of HMGCR. The ubiquitinated HMGCR is then released from the ER by the complex into the cytosol for subsequent destruction. Required for INSIG1 ubiquitination. May be required for EIF3 complex ubiquitination. This chain is E3 ubiquitin-protein ligase RNF139, found in Mus musculus (Mouse).